The primary structure comprises 147 residues: Ribonuclease H (147 aa).

4 residues coordinate Mg(2+): Asp-8, Glu-46, Asp-68, and Asp-132.

It belongs to the RNase H family. Monomer. Requires Mg(2+) as cofactor.

The protein localises to the cytoplasm. The catalysed reaction is Endonucleolytic cleavage to 5'-phosphomonoester.. Endonuclease that specifically degrades the RNA of RNA-DNA hybrids. The polypeptide is Ribonuclease H (Geotalea uraniireducens (strain Rf4) (Geobacter uraniireducens)).